We begin with the raw amino-acid sequence, 296 residues long: DNA primase small subunit PriS (296 aa).

Catalysis depends on residues D82, D84, and D191.

Belongs to the eukaryotic-type primase small subunit family. As to quaternary structure, heterodimer of a small subunit (PriS) and a large subunit (PriL). The cofactor is Mg(2+). Mn(2+) serves as cofactor.

Catalytic subunit of DNA primase, an RNA polymerase that catalyzes the synthesis of short RNA molecules used as primers for DNA polymerase during DNA replication. The small subunit contains the primase catalytic core and has DNA synthesis activity on its own. Binding to the large subunit stabilizes and modulates the activity, increasing the rate of DNA synthesis while decreasing the length of the DNA fragments, and conferring RNA synthesis capability. The DNA polymerase activity may enable DNA primase to also catalyze primer extension after primer synthesis. May also play a role in DNA repair. The sequence is that of DNA primase small subunit PriS from Methanopyrus kandleri (strain AV19 / DSM 6324 / JCM 9639 / NBRC 100938).